Consider the following 1144-residue polypeptide: Nitric oxide synthase, inducible (1144 aa).

The short motif at 23-27 (DINNN) is the DINNN-motif; mediates interaction with SPSB1, SPSB2 and SPSB4 element. Residues 37–59 (SPTIQDDPKSHQNGSPQLLTGTA) form a disordered region. Over residues 47 to 59 (HQNGSPQLLTGTA) the composition is skewed to polar residues. Cys-104 and Cys-109 together coordinate Zn(2+). Ser-112 provides a ligand contact to (6R)-L-erythro-5,6,7,8-tetrahydrobiopterin. Cys-194 is a binding site for heme b. 4 residues coordinate L-arginine: Gln-257, Trp-366, Tyr-367, and Glu-371. The (6R)-L-erythro-5,6,7,8-tetrahydrobiopterin site is built by Arg-375, Ile-456, Trp-457, and Phe-470. Tyr-485 contributes to the heme b binding site. The tract at residues 509 to 529 (FRVLVKVVFFASMLMRKVMAS) is calmodulin-binding. The Flavodoxin-like domain maps to 533–671 (ATVLFATETG…AFRSWAVQTF (139 aa)). Residues Thr-539, Glu-540, Thr-541, Lys-543, and Ser-544 each coordinate FMN. Residue Tyr-569 is modified to Phosphotyrosine. FMN contacts are provided by Ser-585, Thr-586, Ser-622, Cys-629, Glu-655, and Gln-659. The FAD-binding FR-type domain maps to 724–964 (KNVFTMRLKS…VRSVSGFQLP (241 aa)). NADP(+) is bound at residue Arg-744. 6 residues coordinate FAD: His-766, Arg-900, Tyr-902, Ser-903, Thr-918, and Ala-920. Position 923 (Thr-923) interacts with NADP(+). Residues Tyr-924, Val-937, Cys-938, and Ser-939 each contribute to the FAD site. Residues Thr-978, Arg-1011, Ser-1040, Arg-1041, Lys-1047, Tyr-1049, Gln-1051, and Asp-1084 each coordinate NADP(+).

It belongs to the NOS family. As to quaternary structure, homodimer. Interacts with NHERF1. Interacts with GAPDH. Interacts with S100A8 and S100A9 to form the iNOS-S100A8/9 transnitrosylase complex. Interacts with SPSB1, SPSB2 and SPSB4. Interacts with ELOC and CUL5 in the presence of SPSB1 or SPSB2 or SPSB4. Forms a complex with ASL, ASS1 and HSP90AA1; the complex regulates cell-autonomous L-arginine synthesis and citrulline recycling while channeling extracellular L-arginine to nitric oxide synthesis pathway. Heme b is required as a cofactor. The cofactor is FAD. It depends on FMN as a cofactor. (6R)-L-erythro-5,6,7,8-tetrahydrobiopterin serves as cofactor. In terms of processing, polyubiquitinated; mediated by SPSB1, SPSB2 and SPSB4, leading to proteasomal degradation. As to expression, macrophages.

The protein resides in the cytoplasm. It localises to the cytosol. The catalysed reaction is 2 L-arginine + 3 NADPH + 4 O2 + H(+) = 2 L-citrulline + 2 nitric oxide + 3 NADP(+) + 4 H2O. Not stimulated by calcium/calmodulin. Aspirin inhibits expression and function of this enzyme and effects may be exerted at the level of translational/post-translational modification and directly on the catalytic activity. Produces nitric oxide (NO) which is a messenger molecule with diverse functions throughout the body. In macrophages, NO mediates tumoricidal and bactericidal actions. Also has nitrosylase activity and mediates cysteine S-nitrosylation of cytoplasmic target proteins such PTGS2/COX2. As component of the iNOS-S100A8/9 transnitrosylase complex involved in the selective inflammatory stimulus-dependent S-nitrosylation of GAPDH implicated in regulation of the GAIT complex activity and probably multiple targets including ANXA5, EZR, MSN and VIM. Involved in inflammation, enhances the synthesis of pro-inflammatory mediators such as IL6 and IL8. The polypeptide is Nitric oxide synthase, inducible (Nos2) (Mus musculus (Mouse)).